The chain runs to 790 residues: Phenylalanine--tRNA ligase beta subunit (790 aa).

The 110-residue stretch at 40-149 (AEKVSGVVVG…IDAPVGTDIN (110 aa)) folds into the tRNA-binding domain. The B5 domain occupies 402-479 (NKQIKINLSI…RIYGYSKLPE (78 aa)). 4 residues coordinate Mg(2+): Asp457, Asp463, Glu466, and Glu467. In terms of domain architecture, FDX-ACB spans 698 to 789 (SKYPSVSRDI…LKTKFNIEQR (92 aa)).

It belongs to the phenylalanyl-tRNA synthetase beta subunit family. Type 1 subfamily. As to quaternary structure, tetramer of two alpha and two beta subunits. Requires Mg(2+) as cofactor.

The protein localises to the cytoplasm. It carries out the reaction tRNA(Phe) + L-phenylalanine + ATP = L-phenylalanyl-tRNA(Phe) + AMP + diphosphate + H(+). This is Phenylalanine--tRNA ligase beta subunit from Francisella tularensis subsp. tularensis (strain SCHU S4 / Schu 4).